A 296-amino-acid polypeptide reads, in one-letter code: tRNA dimethylallyltransferase (296 aa).

11–18 (GPTAVGKT) is a binding site for ATP. Substrate is bound at residue 13–18 (TAVGKT). The interval 36–39 (DSQQ) is interaction with substrate tRNA.

The protein belongs to the IPP transferase family. Monomer. Mg(2+) serves as cofactor.

It catalyses the reaction adenosine(37) in tRNA + dimethylallyl diphosphate = N(6)-dimethylallyladenosine(37) in tRNA + diphosphate. Functionally, catalyzes the transfer of a dimethylallyl group onto the adenine at position 37 in tRNAs that read codons beginning with uridine, leading to the formation of N6-(dimethylallyl)adenosine (i(6)A). The polypeptide is tRNA dimethylallyltransferase (Streptococcus agalactiae serotype Ia (strain ATCC 27591 / A909 / CDC SS700)).